Reading from the N-terminus, the 495-residue chain is ATP synthase subunit beta, chloroplastic (495 aa).

172 to 179 serves as a coordination point for ATP; that stretch reads GGAGVGKT.

Belongs to the ATPase alpha/beta chains family. In terms of assembly, F-type ATPases have 2 components, CF(1) - the catalytic core - and CF(0) - the membrane proton channel. CF(1) has five subunits: alpha(3), beta(3), gamma(1), delta(1), epsilon(1). CF(0) has four main subunits: a(1), b(1), b'(1) and c(9-12).

The protein localises to the plastid. The protein resides in the chloroplast thylakoid membrane. It carries out the reaction ATP + H2O + 4 H(+)(in) = ADP + phosphate + 5 H(+)(out). Its function is as follows. Produces ATP from ADP in the presence of a proton gradient across the membrane. The catalytic sites are hosted primarily by the beta subunits. The protein is ATP synthase subunit beta, chloroplastic of Pteridium aquilinum (Bracken fern).